The following is a 500-amino-acid chain: MSWTASVFLRTSTTSMKFLRLRWPLPRIPQNKSANVAPRFRSKSAVSQLSSGFKFVQIRKSTCDSNEMTIKAIKARQIYDSRGNPTVEVDLTTELGLFRAAVPSGASTGVHEALELRDNDKANYHGKSVLKAVGHVNDTLGPELIKANLDVVDQASIDNFMIKLDGTENKSKFGANAILGVSLAVAKAGAAKKGVPLYKHIADLAGNKEIILPVPAFNVINGGSHAGNKLAMQEFMILPTGATSFTEAMKMGSEVYHHLKNVIKAKFGLDATAVGDEGGFAPNIQSNKEALNLISDAIAKAGYTGKIEIGMDVAASEFYKDGQYDLDFKNEKSDKSQWLPADKLANLYQEFIKDFPIVSIEDPFDQDHWEAWSNLTGCTDIQIVGDDLTVTNPKRIATAVEKKACNCLLLKVNQIGTVTESIAAHLLAKKNGWGTMVSHRSGETEDSFIGDLVVGLSTGQIKTGAPCRSERLAKYNQILRIEEEIGAGVKFAGKSFRKPQ.

Substrate-binding residues include His-225 and Glu-234. Glu-277 acts as the Proton donor in catalysis. The Mg(2+) site is built by Asp-312, Glu-361, and Asp-386. Positions 361 and 386 each coordinate substrate. Lys-411 (proton acceptor) is an active-site residue. Substrate-binding positions include 438 to 441 (SHRS) and Lys-462.

The protein belongs to the enolase family. Homodimer. Requires Mg(2+) as cofactor.

The protein localises to the cytoplasm. The enzyme catalyses (2R)-2-phosphoglycerate = phosphoenolpyruvate + H2O. It participates in carbohydrate degradation; glycolysis; pyruvate from D-glyceraldehyde 3-phosphate: step 4/5. Its function is as follows. Enzyme of the glycolytic pathway. Glycolysis is essential in glial cells but not in neurons; neurons rely on the citric acid cycle for their energy needs, and on lactate and alanine secreted into the hemolymph by glial cells to fuel it. In Drosophila melanogaster (Fruit fly), this protein is Enolase.